The primary structure comprises 393 residues: Aspartate aminotransferase (393 aa).

Positions 38, 124, and 174 each coordinate L-aspartate. N6-(pyridoxal phosphate)lysine is present on K237.

This sequence belongs to the class-I pyridoxal-phosphate-dependent aminotransferase family. Homodimer. It depends on pyridoxal 5'-phosphate as a cofactor.

Its subcellular location is the cytoplasm. The catalysed reaction is L-aspartate + 2-oxoglutarate = oxaloacetate + L-glutamate. The protein is Aspartate aminotransferase (aspC) of Geobacillus stearothermophilus (Bacillus stearothermophilus).